We begin with the raw amino-acid sequence, 397 residues long: uncharacterized protein (397 aa).

C8, C14, C17, and C95 together coordinate [4Fe-4S] cluster. Residues Q229, Y258, E279, and D325 each coordinate S-adenosyl-L-methionine. C352 functions as the Nucleophile in the catalytic mechanism.

The protein belongs to the class I-like SAM-binding methyltransferase superfamily. RNA M5U methyltransferase family.

This is an uncharacterized protein from Chlamydia muridarum (strain MoPn / Nigg).